The sequence spans 498 residues: XK-related protein 4 (498 aa).

The segment at 24 to 46 (SEHSGSVQGLHPGAQPDSAGAGD) is disordered. Transmembrane regions (helical) follow at residues 81 to 101 (CLWI…DVWL) and 111 to 131 (YWWF…VQLF). A disordered region spans residues 166–203 (SHGDVTAQHHPATPQRQASTASRNTTTNSTASTGLGPR). Over residues 183-198 (ASTASRNTTTNSTAST) the composition is skewed to low complexity. 2 helical membrane passes run 302 to 322 (LFIY…LWYL) and 332 to 352 (FAVP…VFML).

This sequence belongs to the XK family.

The protein resides in the cell membrane. The catalysed reaction is a 1,2-diacyl-sn-glycero-3-phospho-L-serine(in) = a 1,2-diacyl-sn-glycero-3-phospho-L-serine(out). In terms of biological role, phospholipid scramblase that promotes phosphatidylserine exposure on apoptotic cell surface. Phosphatidylserine is a specific marker only present at the surface of apoptotic cells and acts as a specific signal for engulfment. In Tetraodon nigroviridis (Spotted green pufferfish), this protein is XK-related protein 4.